Consider the following 77-residue polypeptide: Bradykinin-potentiating peptide (77 aa).

Positions 1 to 22 are cleaved as a signal peptide; that stretch reads MNKKTLLVIFIVTLLIADEVNS. A propeptide spanning residues 74–77 is cleaved from the precursor; it reads RRRR.

Belongs to the non-disulfide-bridged peptide (NDBP) superfamily. Long chain multifunctional peptide (group 2) family. As to expression, expressed by the venom gland.

It localises to the secreted. Antimicrobial peptide. May also inhibit angiotensin-converting enzyme (ACE) and potentiate bradykinin (BK). This is Bradykinin-potentiating peptide from Tityus discrepans (Venezuelan scorpion).